A 257-amino-acid chain; its full sequence is MGQTIKEIKARLADLTDLSAKEFLEFETDERAGVQAALKSRKKQILAECAEDERLEQMLEFEKELYSQEIELIAGIDEVGRGPLAGPVVTAAVILPKNCKIRGLNDSKKVPKSKHHAILSEIQEKALAIGVGIVDAEKIDEVNIYEATKIAMIQAVSKLSLKPEHLLIDAMVLDLPIAQTKIIHGDARSASIAAASIVAKVTRDEMMKDFALEFPEYDFEHNAGYGTAKHLAALTKYGITRIHRKSYEPIKSMVNFK.

An RNase H type-2 domain is found at 71 to 257 (ELIAGIDEVG…EPIKSMVNFK (187 aa)). 3 residues coordinate a divalent metal cation: aspartate 77, glutamate 78, and aspartate 169.

It belongs to the RNase HII family. It depends on Mn(2+) as a cofactor. The cofactor is Mg(2+).

The protein localises to the cytoplasm. The enzyme catalyses Endonucleolytic cleavage to 5'-phosphomonoester.. Functionally, endonuclease that specifically degrades the RNA of RNA-DNA hybrids. This chain is Ribonuclease HII (rnhB), found in Lactococcus lactis subsp. cremoris (strain MG1363).